The following is a 187-amino-acid chain: Large ribosomal subunit protein uL5 (187 aa).

Belongs to the universal ribosomal protein uL5 family. As to quaternary structure, part of the 50S ribosomal subunit; part of the 5S rRNA/L5/L18/L25 subcomplex. Contacts the 5S rRNA and the P site tRNA. Forms a bridge to the 30S subunit in the 70S ribosome.

In terms of biological role, this is one of the proteins that bind and probably mediate the attachment of the 5S RNA into the large ribosomal subunit, where it forms part of the central protuberance. In the 70S ribosome it contacts protein S13 of the 30S subunit (bridge B1b), connecting the 2 subunits; this bridge is implicated in subunit movement. Contacts the P site tRNA; the 5S rRNA and some of its associated proteins might help stabilize positioning of ribosome-bound tRNAs. This is Large ribosomal subunit protein uL5 from Mycobacterium bovis (strain ATCC BAA-935 / AF2122/97).